The primary structure comprises 410 residues: S-adenosylmethionine synthase (410 aa).

Histidine 15 serves as a coordination point for ATP. Mg(2+) is bound at residue aspartate 17. Glutamate 43 contributes to the K(+) binding site. L-methionine-binding residues include glutamate 56 and glutamine 100. The flexible loop stretch occupies residues 100 to 110; sequence QSPDIAKGVDT. Residues 171–173, 248–249, aspartate 257, 263–264, alanine 280, and lysine 284 each bind ATP; these read DGK, KF, and RK. Residue aspartate 257 coordinates L-methionine. Residue lysine 288 coordinates L-methionine.

This sequence belongs to the AdoMet synthase family. As to quaternary structure, homotetramer; dimer of dimers. Mg(2+) serves as cofactor. K(+) is required as a cofactor.

The protein resides in the cytoplasm. The enzyme catalyses L-methionine + ATP + H2O = S-adenosyl-L-methionine + phosphate + diphosphate. Its pathway is amino-acid biosynthesis; S-adenosyl-L-methionine biosynthesis; S-adenosyl-L-methionine from L-methionine: step 1/1. In terms of biological role, catalyzes the formation of S-adenosylmethionine (AdoMet) from methionine and ATP. The overall synthetic reaction is composed of two sequential steps, AdoMet formation and the subsequent tripolyphosphate hydrolysis which occurs prior to release of AdoMet from the enzyme. The protein is S-adenosylmethionine synthase of Prochlorococcus marinus (strain MIT 9211).